The sequence spans 382 residues: uncharacterized protein (382 aa).

12 consecutive transmembrane segments (helical) span residues 8-28, 45-65, 75-95, 102-122, 131-151, 157-177, 204-224, 231-251, 270-290, 291-311, 325-345, and 349-369; these read VMLLLCGLLLLTLAIAVLNTL, MVSSSYFTGNLVGTLFTGYLI, YLASLIFAAGCVGLGVMVGFW, FIAGIGCAMIWVVVESALMCS, LLAAYMMVYYMGTFLGQLLVS, LLHVLPWVTGMILAGILPLLF, LGVNGCIISGIVLGSLYGLMP, GMANASIGFWMAVLVSAGILG, VQVFVVILGSIAMLTQAAMAP, ALFILGAAGFTLYPVAMAWAC, ALLLSYTVGSLLGPSFAAMLM, and SDNLLFIMIASVSFIYLLMLL.

It belongs to the major facilitator superfamily. YcaD (TC 2.A.1.26) family.

The protein localises to the cell inner membrane. This is an uncharacterized protein from Salmonella newport (strain SL254).